Consider the following 199-residue polypeptide: Probable molybdenum cofactor guanylyltransferase (199 aa).

GTP contacts are provided by residues 9 to 11, Lys-21, Asp-69, and Asp-100; that span reads LAG. Residue Asp-100 coordinates Mg(2+).

This sequence belongs to the MobA family. Mg(2+) is required as a cofactor.

It is found in the cytoplasm. It carries out the reaction Mo-molybdopterin + GTP + H(+) = Mo-molybdopterin guanine dinucleotide + diphosphate. In terms of biological role, transfers a GMP moiety from GTP to Mo-molybdopterin (Mo-MPT) cofactor (Moco or molybdenum cofactor) to form Mo-molybdopterin guanine dinucleotide (Mo-MGD) cofactor. The sequence is that of Probable molybdenum cofactor guanylyltransferase from Bacillus cytotoxicus (strain DSM 22905 / CIP 110041 / 391-98 / NVH 391-98).